Here is a 120-residue protein sequence, read N- to C-terminus: Ribonuclease P protein component (120 aa).

It belongs to the RnpA family. Consists of a catalytic RNA component (M1 or rnpB) and a protein subunit.

It catalyses the reaction Endonucleolytic cleavage of RNA, removing 5'-extranucleotides from tRNA precursor.. In terms of biological role, RNaseP catalyzes the removal of the 5'-leader sequence from pre-tRNA to produce the mature 5'-terminus. It can also cleave other RNA substrates such as 4.5S RNA. The protein component plays an auxiliary but essential role in vivo by binding to the 5'-leader sequence and broadening the substrate specificity of the ribozyme. In Dehalococcoides mccartyi (strain ATCC BAA-2266 / KCTC 15142 / 195) (Dehalococcoides ethenogenes (strain 195)), this protein is Ribonuclease P protein component.